The chain runs to 505 residues: Lysine--tRNA ligase, heat inducible (505 aa).

An N6-acetyllysine mark is found at lysine 114 and lysine 156. Residues glutamate 415 and glutamate 422 each coordinate Mg(2+).

The protein belongs to the class-II aminoacyl-tRNA synthetase family. In terms of assembly, homodimer. Requires Mg(2+) as cofactor.

The protein localises to the cytoplasm. The enzyme catalyses tRNA(Lys) + L-lysine + ATP = L-lysyl-tRNA(Lys) + AMP + diphosphate. The polypeptide is Lysine--tRNA ligase, heat inducible (lysU) (Escherichia coli O6:H1 (strain CFT073 / ATCC 700928 / UPEC)).